We begin with the raw amino-acid sequence, 385 residues long: Deoxyguanosinetriphosphate triphosphohydrolase-like protein (385 aa).

Positions 62–197 (RLTHSLEVAQ…VSLADDIAYS (136 aa)) constitute an HD domain.

Belongs to the dGTPase family. Type 2 subfamily.

In Neorickettsia sennetsu (strain ATCC VR-367 / Miyayama) (Ehrlichia sennetsu), this protein is Deoxyguanosinetriphosphate triphosphohydrolase-like protein.